Reading from the N-terminus, the 132-residue chain is Large ribosomal subunit protein bL17 (132 aa).

It belongs to the bacterial ribosomal protein bL17 family. Part of the 50S ribosomal subunit. Contacts protein L32.

The sequence is that of Large ribosomal subunit protein bL17 from Polaromonas sp. (strain JS666 / ATCC BAA-500).